Consider the following 164-residue polypeptide: Crossover junction endodeoxyribonuclease RuvC (164 aa).

Active-site residues include D7, E67, and D140. The Mg(2+) site is built by D7, E67, and D140.

This sequence belongs to the RuvC family. Homodimer which binds Holliday junction (HJ) DNA. The HJ becomes 2-fold symmetrical on binding to RuvC with unstacked arms; it has a different conformation from HJ DNA in complex with RuvA. In the full resolvosome a probable DNA-RuvA(4)-RuvB(12)-RuvC(2) complex forms which resolves the HJ. Mg(2+) serves as cofactor.

The protein resides in the cytoplasm. It carries out the reaction Endonucleolytic cleavage at a junction such as a reciprocal single-stranded crossover between two homologous DNA duplexes (Holliday junction).. Functionally, the RuvA-RuvB-RuvC complex processes Holliday junction (HJ) DNA during genetic recombination and DNA repair. Endonuclease that resolves HJ intermediates. Cleaves cruciform DNA by making single-stranded nicks across the HJ at symmetrical positions within the homologous arms, yielding a 5'-phosphate and a 3'-hydroxyl group; requires a central core of homology in the junction. The consensus cleavage sequence is 5'-(A/T)TT(C/G)-3'. Cleavage occurs on the 3'-side of the TT dinucleotide at the point of strand exchange. HJ branch migration catalyzed by RuvA-RuvB allows RuvC to scan DNA until it finds its consensus sequence, where it cleaves and resolves the cruciform DNA. In Alkaliphilus metalliredigens (strain QYMF), this protein is Crossover junction endodeoxyribonuclease RuvC.